A 95-amino-acid polypeptide reads, in one-letter code: Integration host factor subunit beta (95 aa).

Positions 56–76 (RAPRTGRNPKTGTSVELDGKY) are disordered.

The protein belongs to the bacterial histone-like protein family. Heterodimer of an alpha and a beta chain.

This protein is one of the two subunits of integration host factor, a specific DNA-binding protein that functions in genetic recombination as well as in transcriptional and translational control. The sequence is that of Integration host factor subunit beta from Shewanella denitrificans (strain OS217 / ATCC BAA-1090 / DSM 15013).